Here is a 381-residue protein sequence, read N- to C-terminus: Arogenate dehydratase/prephenate dehydratase 2, chloroplastic (381 aa).

Residues 1–32 are disordered; it reads MAMHTVRLSPATQLHGGISSNLSPPNRKPNNS. A chloroplast-targeting transit peptide spans 1–66; that stretch reads MAMHTVRLSP…DANGRDNSVR (66 aa). The span at 18–32 shows a compositional bias: polar residues; that stretch reads ISSNLSPPNRKPNNS. The region spanning 100 to 275 is the Prephenate dehydratase domain; it reads RVAYQGVRGA…NVTRFLMLAR (176 aa). An ACT domain is found at 289-375; the sequence is SIVFSLEEGP…TFLRVLGSYP (87 aa).

In terms of tissue distribution, expressed in roots, leaves, stems, flowers and siliques. Most abundant in leaves and seeds.

The protein localises to the plastid. Its subcellular location is the chloroplast stroma. The enzyme catalyses L-arogenate + H(+) = L-phenylalanine + CO2 + H2O. The catalysed reaction is prephenate + H(+) = 3-phenylpyruvate + CO2 + H2O. The protein operates within amino-acid biosynthesis; L-phenylalanine biosynthesis; L-phenylalanine from L-arogenate: step 1/1. It functions in the pathway amino-acid biosynthesis; L-phenylalanine biosynthesis; phenylpyruvate from prephenate: step 1/1. Functionally, converts the prephenate produced from the shikimate-chorismate pathway into phenylalanine. Dehydratase that uses arogenate and prephenate as substrates. Utilzes more efficiently arogenate than prephenate. Required for chloroplast division prior to ARC5, but in an ARC3- and ARC6-dependent manner, especially involved in the Z-ring formation. The chain is Arogenate dehydratase/prephenate dehydratase 2, chloroplastic from Arabidopsis thaliana (Mouse-ear cress).